The primary structure comprises 545 residues: Glucose-6-phosphate isomerase (545 aa).

Glu351 functions as the Proton donor in the catalytic mechanism. Catalysis depends on residues His382 and Lys510.

This sequence belongs to the GPI family.

It is found in the cytoplasm. The catalysed reaction is alpha-D-glucose 6-phosphate = beta-D-fructose 6-phosphate. The protein operates within carbohydrate biosynthesis; gluconeogenesis. Its pathway is carbohydrate degradation; glycolysis; D-glyceraldehyde 3-phosphate and glycerone phosphate from D-glucose: step 2/4. In terms of biological role, catalyzes the reversible isomerization of glucose-6-phosphate to fructose-6-phosphate. This is Glucose-6-phosphate isomerase from Shewanella putrefaciens (strain CN-32 / ATCC BAA-453).